The chain runs to 148 residues: Large-conductance mechanosensitive channel (148 aa).

2 helical membrane passes run 12–32 and 85–105; these read AFAMKGNVIDMAVGVVIGGAF and GQFLQATFDFLIIAFAIFLFI.

This sequence belongs to the MscL family. In terms of assembly, homopentamer.

The protein resides in the cell inner membrane. Channel that opens in response to stretch forces in the membrane lipid bilayer. May participate in the regulation of osmotic pressure changes within the cell. The chain is Large-conductance mechanosensitive channel from Bacteroides thetaiotaomicron (strain ATCC 29148 / DSM 2079 / JCM 5827 / CCUG 10774 / NCTC 10582 / VPI-5482 / E50).